The sequence spans 32 residues: Cytochrome b6-f complex subunit 7 (32 aa).

Residues 9–27 (AAVFWILIPIGLVGGALLL) form a helical membrane-spanning segment.

This sequence belongs to the PetM family. The 4 large subunits of the cytochrome b6-f complex are cytochrome b6, subunit IV (17 kDa polypeptide, PetD), cytochrome f and the Rieske protein, while the 4 small subunits are PetG, PetL, PetM and PetN. The complex functions as a dimer.

The protein localises to the cellular thylakoid membrane. Component of the cytochrome b6-f complex, which mediates electron transfer between photosystem II (PSII) and photosystem I (PSI), cyclic electron flow around PSI, and state transitions. The chain is Cytochrome b6-f complex subunit 7 from Prochlorococcus marinus (strain MIT 9301).